A 135-amino-acid chain; its full sequence is Transcription antitermination protein NusB (135 aa).

Belongs to the NusB family.

Functionally, involved in transcription antitermination. Required for transcription of ribosomal RNA (rRNA) genes. Binds specifically to the boxA antiterminator sequence of the ribosomal RNA (rrn) operons. The polypeptide is Transcription antitermination protein NusB (Lacticaseibacillus paracasei (strain ATCC 334 / BCRC 17002 / CCUG 31169 / CIP 107868 / KCTC 3260 / NRRL B-441) (Lactobacillus paracasei)).